The chain runs to 200 residues: Recombination protein RecR (200 aa).

A C4-type zinc finger spans residues 57-72 (CRQCRTLTEDDLCPQC). Residues 80–175 (TLLCVVEGPM…IASRIAHGVP (96 aa)) enclose the Toprim domain.

This sequence belongs to the RecR family.

In terms of biological role, may play a role in DNA repair. It seems to be involved in an RecBC-independent recombinational process of DNA repair. It may act with RecF and RecO. The sequence is that of Recombination protein RecR from Pseudomonas fluorescens (strain Pf0-1).